We begin with the raw amino-acid sequence, 361 residues long: Histidinol-phosphate aminotransferase (361 aa).

The residue at position 221 (K221) is an N6-(pyridoxal phosphate)lysine.

Belongs to the class-II pyridoxal-phosphate-dependent aminotransferase family. Histidinol-phosphate aminotransferase subfamily. Homodimer. It depends on pyridoxal 5'-phosphate as a cofactor.

The enzyme catalyses L-histidinol phosphate + 2-oxoglutarate = 3-(imidazol-4-yl)-2-oxopropyl phosphate + L-glutamate. It participates in amino-acid biosynthesis; L-histidine biosynthesis; L-histidine from 5-phospho-alpha-D-ribose 1-diphosphate: step 7/9. The sequence is that of Histidinol-phosphate aminotransferase from Symbiobacterium thermophilum (strain DSM 24528 / JCM 14929 / IAM 14863 / T).